Consider the following 170-residue polypeptide: Translation machinery-associated protein 16 homolog (170 aa).

The protein belongs to the TMA16 family.

The protein is Translation machinery-associated protein 16 homolog of Dictyostelium discoideum (Social amoeba).